A 438-amino-acid polypeptide reads, in one-letter code: RNA ligase (438 aa).

ATP contacts are provided by tyrosine 48, arginine 63, and lysine 83. Catalysis depends on lysine 127, which acts as the N6-AMP-lysine intermediate. ATP is bound by residues glutamate 198, lysine 311, and lysine 313. Position 342 (aspartate 342) interacts with Mg(2+).

Requires Mg(2+) as cofactor. Mn(2+) is required as a cofactor.

Its function is as follows. Involved in countering a host defense mechanism which, following viral infection, activates the host induced anticodon nuclease and shuts off viral translation. Repairs 5'-PO4 and 3'-OH groups in the cleaved host tRNA. The chain is RNA ligase from Rhodothermus phage RM378 (Bacteriophage RM378).